A 629-amino-acid polypeptide reads, in one-letter code: 1-deoxy-D-xylulose-5-phosphate synthase (629 aa).

Thiamine diphosphate is bound by residues His-78 and 119–121 (AHS). Asp-150 serves as a coordination point for Mg(2+). Thiamine diphosphate is bound by residues 151-152 (GA), Asn-179, Tyr-286, and Glu-368. Asn-179 is a Mg(2+) binding site.

The protein belongs to the transketolase family. DXPS subfamily. As to quaternary structure, homodimer. Requires Mg(2+) as cofactor. Thiamine diphosphate serves as cofactor.

The enzyme catalyses D-glyceraldehyde 3-phosphate + pyruvate + H(+) = 1-deoxy-D-xylulose 5-phosphate + CO2. It functions in the pathway metabolic intermediate biosynthesis; 1-deoxy-D-xylulose 5-phosphate biosynthesis; 1-deoxy-D-xylulose 5-phosphate from D-glyceraldehyde 3-phosphate and pyruvate: step 1/1. Its function is as follows. Catalyzes the acyloin condensation reaction between C atoms 2 and 3 of pyruvate and glyceraldehyde 3-phosphate to yield 1-deoxy-D-xylulose-5-phosphate (DXP). This chain is 1-deoxy-D-xylulose-5-phosphate synthase, found in Acidovorax sp. (strain JS42).